The primary structure comprises 453 residues: Citrate (Re)-synthase (453 aa).

Residues 46–316 enclose the Pyruvate carboxyltransferase domain; sequence IYITDTTFRD…TKNMKLHVIT (271 aa).

Belongs to the alpha-IPM synthase/homocitrate synthase family. Mn(2+) serves as cofactor. The cofactor is Co(2+). Requires Mg(2+) as cofactor.

The enzyme catalyses oxaloacetate + acetyl-CoA + H2O = citrate + CoA + H(+). With respect to regulation, inhibited by p-chloromercuribenzoate (pCMB), EDTA, Zn(2+) ions, and under aerobic conditions. In terms of biological role, catalyzes the condensation of the acetyl group of acetyl-CoA with oxaloacetate to form citrate. This enzyme is highly Re-face stereospecific with respect to the C-2 of oxaloacetate. The polypeptide is Citrate (Re)-synthase (Clostridium kluyveri (strain ATCC 8527 / DSM 555 / NBRC 12016 / NCIMB 10680 / K1)).